Consider the following 217-residue polypeptide: GTP cyclohydrolase 1 (217 aa).

Cysteine 109, histidine 112, and cysteine 180 together coordinate Zn(2+).

It belongs to the GTP cyclohydrolase I family. As to quaternary structure, toroid-shaped homodecamer, composed of two pentamers of five dimers.

It catalyses the reaction GTP + H2O = 7,8-dihydroneopterin 3'-triphosphate + formate + H(+). It participates in cofactor biosynthesis; 7,8-dihydroneopterin triphosphate biosynthesis; 7,8-dihydroneopterin triphosphate from GTP: step 1/1. The polypeptide is GTP cyclohydrolase 1 (Photobacterium profundum (strain SS9)).